The following is a 493-amino-acid chain: Cardiolipin synthase 1 (493 aa).

Helical transmembrane passes span 13 to 33 and 45 to 65; these read FTIILAIGFIINLVLAFIIIF and WAWLFVLFVLPLIGFILYLFF. PLD phosphodiesterase domains lie at 228-255 and 406-433; these read MNNRNHRKIIIIDGQLGYVGGFNIGDEY and ENGFIHSKMCLIDDEIVSVGTANMDFRS. Catalysis depends on residues His-233, Lys-235, Asp-240, His-411, Lys-413, and Asp-418.

Belongs to the phospholipase D family. Cardiolipin synthase subfamily.

The protein localises to the cell membrane. It catalyses the reaction 2 a 1,2-diacyl-sn-glycero-3-phospho-(1'-sn-glycerol) = a cardiolipin + glycerol. Functionally, catalyzes the reversible phosphatidyl group transfer from one phosphatidylglycerol molecule to another to form cardiolipin (CL) (diphosphatidylglycerol) and glycerol. This is Cardiolipin synthase 1 (cls1) from Staphylococcus aureus (strain MRSA252).